Here is a 349-residue protein sequence, read N- to C-terminus: MATPELMLSLGLIEKDVNADTLWVWCYPSIDADLREVMLRKCCLTLDNQVLHTFVFGQFCRTWYYITTVEVQEPTVLKKVTHFSIVVTAKDFNPEKYAAFSRVLCRTYMKHGSPVKMMEGYIAVLTKGICQSDENGSFLIKDYDVRKALLAGSLKDVVSQFGMETIILYTALMLKKRVVVYHPRIEALLEFTRALPCLVWHRKDWSILHPFVHLENDELENLKVCTGYVAGFVDPEVKDRSDLFDVFVNLPDSEITVSQNAKEAMSMGKLHKEIGNFIVQAAEDADRSDAQVIKDISVKTKEILSNLMSLADHADNSKLTLECLKQGHYPPATENFLFHLAAAEQLLKI.

The uDENN domain maps to 1–135 (MATPELMLSL…TKGICQSDEN (135 aa)). The cDENN domain maps to 160–294 (QFGMETIILY…ADRSDAQVIK (135 aa)). The dDENN domain maps to 296-349 (ISVKTKEILSNLMSLADHADNSKLTLECLKQGHYPPATENFLFHLAAAEQLLKI).

The protein belongs to the DENND10 family.

The protein localises to the late endosome. In terms of biological role, guanine nucleotide exchange factor (GEF) which may be involved in the regulation of late endocytic pathway homeostasis, including endosomal positioning, maturation and secretion. This is DENN domain-containing protein 10 (dennd10) from Danio rerio (Zebrafish).